The primary structure comprises 787 residues: Serine proteinase stubble (787 aa).

Residues 1 to 22 (MKQPTLIRPRLRHRRSTPAAAT) are disordered. Residues 1-58 (MKQPTLIRPRLRHRRSTPAAATKMCPKRHWLVNNRAAGSRGSGGAAARSRRSLDQIVE) lie on the Cytoplasmic side of the membrane. The helical; Signal-anchor for type II membrane protein transmembrane segment at 59-80 (VLVALIVVNCLATAAAALITPP) threads the bilayer. At 81–787 (DSLESLGSLG…FTPWILEHVR (707 aa)) the chain is on the extracellular side. N-linked (GlcNAc...) asparagine glycosylation is present at Asn-177. Residues 225 to 516 (AGTLVIRPSG…EISDSSIPDA (292 aa)) are disordered. 5 stretches are compositionally biased toward low complexity: residues 262 to 280 (SASH…NPNS), 287 to 303 (QQQQ…NHWQ), 358 to 368 (PSTSTSTTSTS), 393 to 438 (SLAA…RTTT), and 449 to 485 (TTAT…VTSS). Polar residues predominate over residues 502 to 512 (GIETNEISDSS). 2 disulfide bridges follow: Cys-532-Cys-660 and Cys-575-Cys-591. The region spanning 544–787 (IVGGKSAAFG…FTPWILEHVR (244 aa)) is the Peptidase S1 domain. Catalysis depends on charge relay system residues His-590 and Asp-640. Asn-672 is a glycosylation site (N-linked (GlcNAc...) asparagine). Disulfide bonds link Cys-704–Cys-723 and Cys-734–Cys-763. Ser-738 (charge relay system) is an active-site residue.

Belongs to the peptidase S1 family. Post-translationally, may activate itself by proteolytic cleavage.

It is found in the membrane. Functionally, hormone dependent protease required for epithelial morphogenesis, including the formation of bristles, legs, and wings. Has a dual function, detaches imaginal disk cells from extracellular matrices through its extracellular proteolytic domain and transmits an outside-to-inside signal to its intracellular domain to modify the cytoskeleton during morphogenesis. This chain is Serine proteinase stubble (Sb), found in Drosophila melanogaster (Fruit fly).